A 160-amino-acid polypeptide reads, in one-letter code: Ribonuclease P protein component 2 (160 aa).

Belongs to the eukaryotic/archaeal RNase P protein component 2 family. Consists of a catalytic RNA component and at least 4-5 protein subunits.

The protein resides in the cytoplasm. It catalyses the reaction Endonucleolytic cleavage of RNA, removing 5'-extranucleotides from tRNA precursor.. Its function is as follows. Part of ribonuclease P, a protein complex that generates mature tRNA molecules by cleaving their 5'-ends. This is Ribonuclease P protein component 2 from Methanoculleus marisnigri (strain ATCC 35101 / DSM 1498 / JR1).